A 353-amino-acid chain; its full sequence is Putative 3-oxoacyl-[acyl-carrier-protein] synthase 3 (353 aa).

Catalysis depends on residues Cys122, His268, and Asn299.

It belongs to the thiolase-like superfamily. FabH family. As to quaternary structure, homodimer.

It localises to the cytoplasm. It catalyses the reaction malonyl-[ACP] + acetyl-CoA + H(+) = 3-oxobutanoyl-[ACP] + CO2 + CoA. It participates in lipid metabolism; fatty acid biosynthesis. Its function is as follows. May catalyze the condensation reaction of fatty acid synthesis by the addition to an acyl acceptor of two carbons from malonyl-ACP. The protein is Putative 3-oxoacyl-[acyl-carrier-protein] synthase 3 of Campylobacter jejuni subsp. jejuni serotype O:2 (strain ATCC 700819 / NCTC 11168).